We begin with the raw amino-acid sequence, 1684 residues long: Protein Wiz (1684 aa).

The disordered stretch occupies residues 1-77; the sequence is MEGLLAGGLA…PGLSEALPRA (77 aa). Over residues 13 to 24 the composition is skewed to basic and acidic residues; sequence DHPRGPAPREDI. 5 consecutive C2H2-type zinc fingers follow at residues 308 to 330, 345 to 367, 454 to 477, 734 to 756, and 802 to 824; these read FPCI…MSQH, LACS…WQLH, NTCV…RLVH, RKCP…VRGH, and MRCD…ARAH. The disordered stretch occupies residues 854–876; the sequence is LPPSPLGREPGGPPRSFLTSRRP. Residues 903–925 form a C2H2-type 6 zinc finger; that stretch reads TTCEVCGACFETRKGLSSHARSH. Residues Lys-916, Lys-972, Lys-988, Lys-1000, and Lys-1021 each participate in a glycyl lysine isopeptide (Lys-Gly) (interchain with G-Cter in SUMO2) cross-link. The interval 1005–1072 is disordered; the sequence is FSAKGLTHPS…PLNLTSGPEP (68 aa). Residue Ser-1029 is modified to Phosphoserine. Phosphothreonine is present on Thr-1031. Residues Lys-1033 and Lys-1038 each participate in a glycyl lysine isopeptide (Lys-Gly) (interchain with G-Cter in SUMO2) cross-link. Phosphoserine is present on residues Ser-1039 and Ser-1045. The segment covering 1040 to 1057 has biased composition (polar residues); sequence PQLSLSPRPTSPKAQWPQ. Thr-1049 bears the Phosphothreonine mark. 2 positions are modified to phosphoserine: Ser-1050 and Ser-1058. The segment at 1063–1067 is interaction with CTBP1 and CTBP2 1; the sequence is PLNLT. Residues 1076 to 1098 form a C2H2-type 7 zinc finger; it reads IRCEFCGEFFENRKGLSSHARSH. Residue Lys-1089 forms a Glycyl lysine isopeptide (Lys-Gly) (interchain with G-Cter in SUMO2) linkage. A phosphoserine mark is found at Ser-1112 and Ser-1139. Residues 1127 to 1208 are disordered; that stretch reads SRPGGHLHPP…GLATPSLPKK (82 aa). Residues Lys-1141 and Lys-1145 each participate in a glycyl lysine isopeptide (Lys-Gly) (interchain with G-Cter in SUMO2) cross-link. A phosphoserine mark is found at Ser-1155, Ser-1160, and Ser-1167. Glycyl lysine isopeptide (Lys-Gly) (interchain with G-Cter in SUMO2) cross-links involve residues Lys-1171 and Lys-1172. A phosphoserine mark is found at Ser-1179 and Ser-1184. Lys-1195 bears the N6,N6,N6-trimethyllysine; by EHMT2; alternate mark. Position 1195 is an N6,N6-dimethyllysine; by EHMT2; alternate (Lys-1195). Lys-1210 is covalently cross-linked (Glycyl lysine isopeptide (Lys-Gly) (interchain with G-Cter in SUMO2)). Residues 1247–1251 form an interaction with CTBP1 and CTBP2 2 region; the sequence is PLNLS. Residues 1260 to 1282 form a C2H2-type 8 zinc finger; it reads IRCEFCGEFFENRKGLSSHARSH. Lys-1273 participates in a covalent cross-link: Glycyl lysine isopeptide (Lys-Gly) (interchain with G-Cter in SUMO2). Ser-1296 carries the phosphoserine modification. A Glycyl lysine isopeptide (Lys-Gly) (interchain with G-Cter in SUMO2) cross-link involves residue Lys-1315. A disordered region spans residues 1320–1384; that stretch reads AGDLAPALTE…SKPSAASYLG (65 aa). Over residues 1335–1351 the composition is skewed to low complexity; it reads AAPGALHSPLPLSPLAS. Ser-1342 and Ser-1347 each carry phosphoserine. Residues Lys-1376, Lys-1389, Lys-1403, Lys-1405, and Lys-1415 each participate in a glycyl lysine isopeptide (Lys-Gly) (interchain with G-Cter in SUMO2) cross-link. The C2H2-type 9 zinc-finger motif lies at 1430–1452; the sequence is ACCELCGLYFENRKALASHARAH. Glycyl lysine isopeptide (Lys-Gly) (interchain with G-Cter in SUMO2) cross-links involve residues Lys-1481, Lys-1497, and Lys-1510. Disordered regions lie at residues 1496-1587 and 1592-1611; these read TKKF…GEEV and QKLE…PSLV. Residue Ser-1550 is modified to Phosphoserine. Lys-1556 participates in a covalent cross-link: Glycyl lysine isopeptide (Lys-Gly) (interchain with G-Cter in SUMO1); alternate. Lys-1556 is covalently cross-linked (Glycyl lysine isopeptide (Lys-Gly) (interchain with G-Cter in SUMO2); alternate). Over residues 1556–1574 the composition is skewed to basic and acidic residues; the sequence is KSEEHQRQNINKFERRQAR. Residues Lys-1567 and Lys-1593 each participate in a glycyl lysine isopeptide (Lys-Gly) (interchain with G-Cter in SUMO2) cross-link. The segment covering 1599–1611 has biased composition (pro residues); sequence QPPPRVRPVPSLV. The C2H2-type 10 zinc-finger motif lies at 1629–1655; the sequence is LKCRFCEVEFQGPLSIQEEWVRHLQRH. A disordered region spans residues 1662 to 1684; sequence SKADPPPEEPQAPQAQTAAVEAP. Residue Lys-1663 forms a Glycyl lysine isopeptide (Lys-Gly) (interchain with G-Cter in SUMO2) linkage. The segment covering 1672–1684 has biased composition (low complexity); sequence QAPQAQTAAVEAP.

It belongs to the krueppel C2H2-type zinc-finger protein family. In terms of assembly, part of a complex containing at least CDYL, REST, WIZ, SETB1, EHMT1 and EHMT2. Interacts with EHMT1, EHMT2, CTBP1 and CTBP2. In terms of tissue distribution, according to PubMed:9795207, isoform L and isoform S are brain-specific. According to PubMed:16702210, isoform S is ubiquitously expressed.

Its subcellular location is the nucleus. May link EHMT1 and EHMT2 histone methyltransferases to the CTBP corepressor machinery. May be involved in EHMT1-EHMT2 heterodimer formation and stabilization. In Mus musculus (Mouse), this protein is Protein Wiz (Wiz).